The sequence spans 477 residues: Cysteine--tRNA ligase (477 aa).

Cysteine 42 serves as a coordination point for Zn(2+). Residues 44–54 carry the 'HIGH' region motif; the sequence is ATVQGLPHIGH. Zn(2+)-binding residues include cysteine 220, histidine 245, and glutamate 249. A 'KMSKS' region motif is present at residues 276–280; it reads KMSKS. Lysine 279 contacts ATP.

It belongs to the class-I aminoacyl-tRNA synthetase family. Monomer. Zn(2+) is required as a cofactor.

It localises to the cytoplasm. The enzyme catalyses tRNA(Cys) + L-cysteine + ATP = L-cysteinyl-tRNA(Cys) + AMP + diphosphate. The chain is Cysteine--tRNA ligase from Mycolicibacterium smegmatis (strain ATCC 700084 / mc(2)155) (Mycobacterium smegmatis).